The chain runs to 453 residues: Bifunctional protein GlmU (453 aa).

Residues 1–231 (MERSSLAVIL…EKELTGCNNR (231 aa)) are pyrophosphorylase. UDP-N-acetyl-alpha-D-glucosamine contacts are provided by residues 10–13 (LAAG), lysine 24, glutamine 77, 82–83 (GT), 105–107 (YGD), glycine 143, glutamate 157, asparagine 172, and asparagine 229. A Mg(2+)-binding site is contributed by aspartate 107. Residue asparagine 229 coordinates Mg(2+). A linker region spans residues 232 to 252 (AELAFIERLWQERRRHELMVD). The interval 253 to 453 (GVSMIAPETV…AQKEAKKKSS (201 aa)) is N-acetyltransferase. Residues arginine 318 and lysine 336 each contribute to the UDP-N-acetyl-alpha-D-glucosamine site. Histidine 348 (proton acceptor) is an active-site residue. UDP-N-acetyl-alpha-D-glucosamine contacts are provided by tyrosine 351 and asparagine 362. Acetyl-CoA-binding positions include alanine 365, 371–372 (NY), serine 390, serine 408, and arginine 425.

It in the N-terminal section; belongs to the N-acetylglucosamine-1-phosphate uridyltransferase family. This sequence in the C-terminal section; belongs to the transferase hexapeptide repeat family. As to quaternary structure, homotrimer. It depends on Mg(2+) as a cofactor.

It localises to the cytoplasm. The enzyme catalyses alpha-D-glucosamine 1-phosphate + acetyl-CoA = N-acetyl-alpha-D-glucosamine 1-phosphate + CoA + H(+). It catalyses the reaction N-acetyl-alpha-D-glucosamine 1-phosphate + UTP + H(+) = UDP-N-acetyl-alpha-D-glucosamine + diphosphate. Its pathway is nucleotide-sugar biosynthesis; UDP-N-acetyl-alpha-D-glucosamine biosynthesis; N-acetyl-alpha-D-glucosamine 1-phosphate from alpha-D-glucosamine 6-phosphate (route II): step 2/2. The protein operates within nucleotide-sugar biosynthesis; UDP-N-acetyl-alpha-D-glucosamine biosynthesis; UDP-N-acetyl-alpha-D-glucosamine from N-acetyl-alpha-D-glucosamine 1-phosphate: step 1/1. It participates in bacterial outer membrane biogenesis; LPS lipid A biosynthesis. Functionally, catalyzes the last two sequential reactions in the de novo biosynthetic pathway for UDP-N-acetylglucosamine (UDP-GlcNAc). The C-terminal domain catalyzes the transfer of acetyl group from acetyl coenzyme A to glucosamine-1-phosphate (GlcN-1-P) to produce N-acetylglucosamine-1-phosphate (GlcNAc-1-P), which is converted into UDP-GlcNAc by the transfer of uridine 5-monophosphate (from uridine 5-triphosphate), a reaction catalyzed by the N-terminal domain. This Agrobacterium fabrum (strain C58 / ATCC 33970) (Agrobacterium tumefaciens (strain C58)) protein is Bifunctional protein GlmU.